Consider the following 335-residue polypeptide: Corrinoid adenosyltransferase PduO (335 aa).

His206 serves as a coordination point for heme.

Belongs to the Cob(I)alamin adenosyltransferase family. PduO subfamily. In terms of assembly, forms a complex with PduS. It depends on heme b as a cofactor. Mg(2+) is required as a cofactor.

It localises to the bacterial microcompartment. It catalyses the reaction cob(I)alamin-[corrinoid adenosyltransferase] + ATP = apo-[corrinoid adenosyltransferase] + adenosylcob(III)alamin + triphosphate. It functions in the pathway polyol metabolism; 1,2-propanediol degradation. It participates in cofactor biosynthesis; adenosylcobalamin biosynthesis. In terms of biological role, converts cob(I)alamin to adenosylcobalamin (adenosylcob(III)alamin), the cofactor for propanediol dehydratase. Found in the bacterial microcompartment (BMC) dedicated to 1,2-propanediol (1,2-PD) degradation. PduS and PduO allow regeneration of the adenosylcobalamin cofactor within the BMC. Expression of a cosmid containing the full 21-gene pdu operon in E.coli allows E.coli to grow on 1,2-propanediol (1,2-PD) with the appearance of bacterial microcompartments (BMC) in its cytoplasm. Its function is as follows. The 1,2-PD-specific bacterial microcompartment (BMC) concentrates low levels of 1,2-PD catabolic enzymes, concentrates volatile reaction intermediates thus enhancing pathway flux and keeps the level of toxic, mutagenic propionaldehyde low. The polypeptide is Corrinoid adenosyltransferase PduO (Citrobacter freundii).